Consider the following 271-residue polypeptide: Putative two-component membrane permease complex subunit SMU_746c (271 aa).

Helical transmembrane passes span 34–54 (LAYISMALSFILALVQLTIWM) and 70–90 (FFSPIILAIPVFIGLLVPTVP).

The protein belongs to the UPF0703 family. As to quaternary structure, interacts with SMU_747c.

It is found in the cell membrane. In terms of biological role, could be part of a two-component membrane permease system responsible for amino acid transport under low pH. Involved in acidogenesis, biofilm formation and low-pH survival. In Streptococcus mutans serotype c (strain ATCC 700610 / UA159), this protein is Putative two-component membrane permease complex subunit SMU_746c.